A 990-amino-acid polypeptide reads, in one-letter code: Serine/threonine-protein kinase ATG1 (990 aa).

Positions 15–334 constitute a Protein kinase domain; sequence FVIENEIGKG…FDDFFASPVI (320 aa). ATP contacts are provided by residues 21–29 and Lys-44; that span reads IGKGSFAVV. Catalysis depends on Asp-165, which acts as the Proton acceptor. Positions 375-408 are enriched in polar residues; sequence VSSIEASTQQPGVQPPVSTATSPPALESRSTQEA. Disordered regions lie at residues 375–499, 529–566, 579–614, 750–784, and 970–990; these read VSSI…GGED, SRLG…TILS, ASTG…QGGQ, LSQE…SSSS, and SPVG…TESP. Low complexity-rich tracts occupy residues 529–554 and 587–613; these read SRLG…SAPG and PPGS…RQGG. The segment covering 750–771 has biased composition (polar residues); it reads LSQELDSSTATSGISPSRNSVQ. Low complexity predominate over residues 772 to 784; that stretch reads GSARRVGSISSSS.

It belongs to the protein kinase superfamily. Ser/Thr protein kinase family. APG1/unc-51/ULK1 subfamily. In terms of assembly, homodimer. Forms a ternary complex with ATG13 and ATG17.

It is found in the cytoplasm. The protein resides in the preautophagosomal structure membrane. The catalysed reaction is L-seryl-[protein] + ATP = O-phospho-L-seryl-[protein] + ADP + H(+). It catalyses the reaction L-threonyl-[protein] + ATP = O-phospho-L-threonyl-[protein] + ADP + H(+). In terms of biological role, serine/threonine protein kinase involved in the cytoplasm to vacuole transport (Cvt) and found to be essential in autophagy, where it is required for the formation of autophagosomes. Involved in the clearance of protein aggregates which cannot be efficiently cleared by the proteasome. Required for selective autophagic degradation of the nucleus (nucleophagy) as well as for mitophagy which contributes to regulate mitochondrial quantity and quality by eliminating the mitochondria to a basal level to fulfill cellular energy requirements and preventing excess ROS production. Also involved in endoplasmic reticulum-specific autophagic process, in selective removal of ER-associated degradation (ERAD) substrates. Plays a key role in ATG9 and ATG23 cycling through the pre-autophagosomal structure and is necessary to promote ATG18 binding to ATG9 through phosphorylation of ATG9. Catalyzes phosphorylation of ATG4, decreasing the interaction between ATG4 and ATG8 and impairing deconjugation of PE-conjugated forms of ATG8. Required for wild-type budding of haploid sporidia and for complete symptom development during pathogenic growth such as gall formation and teliospore production in ears of mature maize. The sequence is that of Serine/threonine-protein kinase ATG1 from Mycosarcoma maydis (Corn smut fungus).